Consider the following 242-residue polypeptide: Ubiquitin-conjugating enzyme E2 6 (242 aa).

At 1 to 220 (MASRQSQKRL…HSTPSFGVQR (220 aa)) the chain is on the cytoplasmic side. Positions 5–156 (QSQKRLTKEY…NQRFTKQFPD (152 aa)) constitute a UBC core domain. C87 acts as the Glycyl thioester intermediate in catalysis. Positions 170-190 (AREQAAATTDSTDPEKPFDVR) are disordered. A helical membrane pass occupies residues 221 to 240 (FTLVGVVVAAFIAAYFNFFS).

This sequence belongs to the ubiquitin-conjugating enzyme family.

Its subcellular location is the endoplasmic reticulum membrane. The catalysed reaction is S-ubiquitinyl-[E1 ubiquitin-activating enzyme]-L-cysteine + [E2 ubiquitin-conjugating enzyme]-L-cysteine = [E1 ubiquitin-activating enzyme]-L-cysteine + S-ubiquitinyl-[E2 ubiquitin-conjugating enzyme]-L-cysteine.. The protein operates within protein modification; protein ubiquitination. Functionally, catalyzes the covalent attachment of ubiquitin to other proteins. Functions in degradation of misfolded or regulated proteins localized in the endoplasmic reticulum (ER) lumen or membrane via the ubiquitin-proteasome system. Cognate E2 conjugating enzyme for the DOA10 ubiquitin ligase complex, which is part of the ERAD-C pathway responsible for the rapid degradation of membrane proteins with misfolded cytoplasmic domains. The polypeptide is Ubiquitin-conjugating enzyme E2 6 (UBC6) (Debaryomyces hansenii (strain ATCC 36239 / CBS 767 / BCRC 21394 / JCM 1990 / NBRC 0083 / IGC 2968) (Yeast)).